The sequence spans 340 residues: Phosphoribosylformylglycinamidine cyclo-ligase (340 aa).

Belongs to the AIR synthase family.

It localises to the cytoplasm. The enzyme catalyses 2-formamido-N(1)-(5-O-phospho-beta-D-ribosyl)acetamidine + ATP = 5-amino-1-(5-phospho-beta-D-ribosyl)imidazole + ADP + phosphate + H(+). It functions in the pathway purine metabolism; IMP biosynthesis via de novo pathway; 5-amino-1-(5-phospho-D-ribosyl)imidazole from N(2)-formyl-N(1)-(5-phospho-D-ribosyl)glycinamide: step 2/2. This is Phosphoribosylformylglycinamidine cyclo-ligase from Streptococcus pneumoniae (strain CGSP14).